The following is a 327-amino-acid chain: GPI-linked NAD(P)(+)--arginine ADP-ribosyltransferase 1 (327 aa).

The N-terminal stretch at 1–22 (MQMPAMMSLLLVSVGLMEALQA) is a signal peptide. Cystine bridges form between Cys53-Cys277 and Cys174-Cys224. Asn65 carries N-linked (GlcNAc...) asparagine glycosylation. The TR mART core domain maps to 73 to 273 (QVYADSWTLA…IYLRALGKHS (201 aa)). Positions 121 and 179 each coordinate NAD(+). Active-site residues include Arg179 and Ser202. Position 233 (Ser233) interacts with NAD(+). The active site involves Glu240. A glycan (N-linked (GlcNAc...) asparagine) is linked at Asn253. Ser295 carries GPI-anchor amidated serine lipidation. Residues 296–327 (AMGQSPLSAVWSLLLLLWFLVVRAFPDGPGLL) constitute a propeptide, removed in mature form.

The protein belongs to the Arg-specific ADP-ribosyltransferase family.

It is found in the sarcoplasmic reticulum membrane. It carries out the reaction L-arginyl-[protein] + NAD(+) = N(omega)-(ADP-D-ribosyl)-L-arginyl-[protein] + nicotinamide + H(+). Has ADP-ribosyltransferase activity toward GLP1R. In Homo sapiens (Human), this protein is GPI-linked NAD(P)(+)--arginine ADP-ribosyltransferase 1 (ART1).